A 764-amino-acid chain; its full sequence is Phosphoribosylformylglycinamidine synthase subunit PurL (764 aa).

A disordered region spans residues 1 to 23 (MTQEVDTVERAAATPDHPQPYRE). His-57 is an active-site residue. Residues Tyr-60 and Lys-104 each contribute to the ATP site. Glu-106 serves as a coordination point for Mg(2+). Residues 107–110 (SHNH) and Arg-129 each bind substrate. His-108 (proton acceptor) is an active-site residue. Mg(2+) is bound at residue Asp-130. Gln-258 serves as a coordination point for substrate. Residue Asp-286 coordinates Mg(2+). 330-332 (ESQ) lines the substrate pocket. Asn-518 and Gly-555 together coordinate ATP. Asn-556 lines the Mg(2+) pocket. Residue Ser-558 participates in substrate binding.

This sequence belongs to the FGAMS family. Monomer. Part of the FGAM synthase complex composed of 1 PurL, 1 PurQ and 2 PurS subunits.

The protein resides in the cytoplasm. The enzyme catalyses N(2)-formyl-N(1)-(5-phospho-beta-D-ribosyl)glycinamide + L-glutamine + ATP + H2O = 2-formamido-N(1)-(5-O-phospho-beta-D-ribosyl)acetamidine + L-glutamate + ADP + phosphate + H(+). It functions in the pathway purine metabolism; IMP biosynthesis via de novo pathway; 5-amino-1-(5-phospho-D-ribosyl)imidazole from N(2)-formyl-N(1)-(5-phospho-D-ribosyl)glycinamide: step 1/2. Part of the phosphoribosylformylglycinamidine synthase complex involved in the purines biosynthetic pathway. Catalyzes the ATP-dependent conversion of formylglycinamide ribonucleotide (FGAR) and glutamine to yield formylglycinamidine ribonucleotide (FGAM) and glutamate. The FGAM synthase complex is composed of three subunits. PurQ produces an ammonia molecule by converting glutamine to glutamate. PurL transfers the ammonia molecule to FGAR to form FGAM in an ATP-dependent manner. PurS interacts with PurQ and PurL and is thought to assist in the transfer of the ammonia molecule from PurQ to PurL. This Mycolicibacterium vanbaalenii (strain DSM 7251 / JCM 13017 / BCRC 16820 / KCTC 9966 / NRRL B-24157 / PYR-1) (Mycobacterium vanbaalenii) protein is Phosphoribosylformylglycinamidine synthase subunit PurL.